Consider the following 365-residue polypeptide: Methylthioribose-1-phosphate isomerase (365 aa).

Aspartate 255 serves as the catalytic Proton donor.

This sequence belongs to the eIF-2B alpha/beta/delta subunits family. MtnA subfamily.

It is found in the cytoplasm. The protein resides in the nucleus. The catalysed reaction is 5-(methylsulfanyl)-alpha-D-ribose 1-phosphate = 5-(methylsulfanyl)-D-ribulose 1-phosphate. It functions in the pathway amino-acid biosynthesis; L-methionine biosynthesis via salvage pathway; L-methionine from S-methyl-5-thio-alpha-D-ribose 1-phosphate: step 1/6. Its function is as follows. Catalyzes the interconversion of methylthioribose-1-phosphate (MTR-1-P) into methylthioribulose-1-phosphate (MTRu-1-P). The protein is Methylthioribose-1-phosphate isomerase of Drosophila willistoni (Fruit fly).